Here is a 493-residue protein sequence, read N- to C-terminus: Cobyric acid synthase (493 aa).

Residues 246 to 440 (PIDIAVIKMP…IHGVFDGVSF (195 aa)) enclose the GATase cobBQ-type domain. The active-site Nucleophile is the C326. The active site involves H432.

This sequence belongs to the CobB/CobQ family. CobQ subfamily.

The protein operates within cofactor biosynthesis; adenosylcobalamin biosynthesis. Functionally, catalyzes amidations at positions B, D, E, and G on adenosylcobyrinic A,C-diamide. NH(2) groups are provided by glutamine, and one molecule of ATP is hydrogenolyzed for each amidation. The sequence is that of Cobyric acid synthase from Clostridium botulinum (strain Langeland / NCTC 10281 / Type F).